The chain runs to 197 residues: HTH-type transcriptional regulator BetI (197 aa).

The 61-residue stretch at 8–68 (PIRRQQLIEA…ATMRYLMSVL (61 aa)) folds into the HTH tetR-type domain. Residues 31 to 50 (SIALIARLAGVSNGIISHYF) constitute a DNA-binding region (H-T-H motif).

The protein operates within amine and polyamine biosynthesis; betaine biosynthesis via choline pathway [regulation]. Functionally, repressor involved in the biosynthesis of the osmoprotectant glycine betaine. It represses transcription of the choline transporter BetT and the genes of BetAB involved in the synthesis of glycine betaine. This Pseudomonas fluorescens (strain Pf0-1) protein is HTH-type transcriptional regulator BetI.